Reading from the N-terminus, the 427-residue chain is Trigger factor (427 aa).

In terms of domain architecture, PPIase FKBP-type spans 163-248; the sequence is GDTVVIDFVG…IHEVKTKEVP (86 aa).

Belongs to the FKBP-type PPIase family. Tig subfamily.

The protein localises to the cytoplasm. The catalysed reaction is [protein]-peptidylproline (omega=180) = [protein]-peptidylproline (omega=0). Its function is as follows. Involved in protein export. Acts as a chaperone by maintaining the newly synthesized protein in an open conformation. Functions as a peptidyl-prolyl cis-trans isomerase. This Streptococcus agalactiae serotype V (strain ATCC BAA-611 / 2603 V/R) protein is Trigger factor.